A 192-amino-acid polypeptide reads, in one-letter code: Protein GrpE (192 aa).

The disordered stretch occupies residues 1–43 (MSKEEFPHEKDLKDEVTPDKAPKKDPKAASKEEVKEDPAKDYE).

It belongs to the GrpE family. Homodimer.

Its subcellular location is the cytoplasm. In terms of biological role, participates actively in the response to hyperosmotic and heat shock by preventing the aggregation of stress-denatured proteins, in association with DnaK and GrpE. It is the nucleotide exchange factor for DnaK and may function as a thermosensor. Unfolded proteins bind initially to DnaJ; upon interaction with the DnaJ-bound protein, DnaK hydrolyzes its bound ATP, resulting in the formation of a stable complex. GrpE releases ADP from DnaK; ATP binding to DnaK triggers the release of the substrate protein, thus completing the reaction cycle. Several rounds of ATP-dependent interactions between DnaJ, DnaK and GrpE are required for fully efficient folding. The chain is Protein GrpE from Lactobacillus gasseri (strain ATCC 33323 / DSM 20243 / BCRC 14619 / CIP 102991 / JCM 1131 / KCTC 3163 / NCIMB 11718 / NCTC 13722 / AM63).